Reading from the N-terminus, the 211-residue chain is N-(5'-phosphoribosyl)anthranilate isomerase (211 aa).

It belongs to the TrpF family.

The enzyme catalyses N-(5-phospho-beta-D-ribosyl)anthranilate = 1-(2-carboxyphenylamino)-1-deoxy-D-ribulose 5-phosphate. It functions in the pathway amino-acid biosynthesis; L-tryptophan biosynthesis; L-tryptophan from chorismate: step 3/5. The sequence is that of N-(5'-phosphoribosyl)anthranilate isomerase from Pseudomonas paraeruginosa (strain DSM 24068 / PA7) (Pseudomonas aeruginosa (strain PA7)).